A 448-amino-acid polypeptide reads, in one-letter code: Ribosomal protein uS12 methylthiotransferase RimO (448 aa).

An MTTase N-terminal domain is found at 13 to 128 (KSFFITTLGC…AGEILRKNFP (116 aa)). [4Fe-4S] cluster-binding residues include Cys-22, Cys-58, Cys-91, Cys-167, Cys-171, and Cys-174. In terms of domain architecture, Radical SAM core spans 153-382 (NYSKPYSYVK…AYLGTLKTIH (230 aa)). Residues 383–448 (QNRIGKIYPC…ELDMSGTWVD (66 aa)) enclose the TRAM domain.

Belongs to the methylthiotransferase family. RimO subfamily. [4Fe-4S] cluster is required as a cofactor.

The protein resides in the cytoplasm. The catalysed reaction is L-aspartate(89)-[ribosomal protein uS12]-hydrogen + (sulfur carrier)-SH + AH2 + 2 S-adenosyl-L-methionine = 3-methylsulfanyl-L-aspartate(89)-[ribosomal protein uS12]-hydrogen + (sulfur carrier)-H + 5'-deoxyadenosine + L-methionine + A + S-adenosyl-L-homocysteine + 2 H(+). Catalyzes the methylthiolation of an aspartic acid residue of ribosomal protein uS12. This Leptospira biflexa serovar Patoc (strain Patoc 1 / Ames) protein is Ribosomal protein uS12 methylthiotransferase RimO.